A 181-amino-acid polypeptide reads, in one-letter code: Inner membrane-spanning protein YciB (181 aa).

5 helical membrane-spanning segments follow: residues 22–42 (IYTATGALIVATAVQLILTYV), 50–70 (MQLITFIMVTVFGGMTIFLHD), 80–100 (IVYAVFAAGLIIAQILGRPII), 118–138 (INYAWILFFTACSIANLYVAF), and 148–168 (FKVFGLLGLTFIYTLLTGMYV).

Belongs to the YciB family.

It localises to the cell inner membrane. Functionally, plays a role in cell envelope biogenesis, maintenance of cell envelope integrity and membrane homeostasis. The sequence is that of Inner membrane-spanning protein YciB from Aliivibrio salmonicida (strain LFI1238) (Vibrio salmonicida (strain LFI1238)).